The chain runs to 411 residues: Methyl-CpG-binding domain protein 2 (411 aa).

Residues 1–149 (MRAHPGGGRC…GPRATESGKR (149 aa)) form a required for interaction with DHX9 and PRMT5 region. A disordered region spans residues 1–158 (MRAHPGGGRC…RMDCPALPPG (158 aa)). A compositionally biased stretch (basic residues) spans 77–95 (GRGRGRGRGRGRGRGRGRG). Residues 98–121 (PSGGSGLGGDGGGCGGGGSGGGGA) show a composition bias toward gly residues. The region spanning 145–213 (ESGKRMDCPA…SSFDFRTGKM (69 aa)) is the MBD domain. A Phosphoserine modification is found at S181. Residues 214–241 (MPSKLQKNKQRLRNDPLNQNKGKPDLNT) form a disordered region. Positions 229 to 241 (PLNQNKGKPDLNT) are enriched in polar residues. S407 bears the Phosphoserine mark.

In terms of assembly, heterodimer with MBD3 (via N-terminus). Component of the MeCP1 complex that contains HDAC1 and HDAC2. Component of the nucleosome remodeling and deacetylase (NuRD) repressor complex, composed of core proteins MTA1, MTA2, MTA3, RBBP4, RBBP7, HDAC1, HDAC2, MBD2, MBD3, and peripherally associated proteins CDK2AP1, CDK2AP2, GATAD2A, GATAD2B, CHD3, CHD4 and CHD5. The exact stoichiometry of the NuRD complex is unknown, and some subunits such as MBD2 and MBD3, GATAD2A and GATAD2B, and CHD3, CHD4 and CHD5 define mutually exclusive NuRD complexes. Interacts with CDK2AP1. Interacts with DHX9. Interacts with DNMT1. Interacts with GATAD2A/p66-alpha. Interacts with GATAD2B/p66-beta. Interacts with GPN1. Interacts with MIZF. Interacts with PRMT5. Interacts with SIN3A. Interacts with SPHK2. In terms of tissue distribution, highly expressed in brain, heart, kidney, stomach, testis and placenta.

Its subcellular location is the nucleus. It is found in the chromosome. In terms of biological role, binds CpG islands in promoters where the DNA is methylated at position 5 of cytosine within CpG dinucleotides. Binds hemimethylated DNA as well. Recruits histone deacetylases and DNA methyltransferases to chromatin. Acts as a component of the histone deacetylase NuRD complex which participates in the remodeling of chromatin. Acts as a transcriptional repressor and plays a role in gene silencing. Functions as a scaffold protein, targeting GATAD2A and GATAD2B to chromatin to promote repression. May enhance the activation of some unmethylated cAMP-responsive promoters. The sequence is that of Methyl-CpG-binding domain protein 2 from Homo sapiens (Human).